The chain runs to 559 residues: NXPE family member 3 (559 aa).

The N-terminal stretch at 1–30 (MWINFVKLRLFCCLLAVLMVVVLVVNVTQV) is a signal peptide. Residues Asn26, Asn237, and Asn346 are each glycosylated (N-linked (GlcNAc...) asparagine).

Belongs to the NXPE family.

It is found in the secreted. The polypeptide is NXPE family member 3 (NXPE3) (Bos taurus (Bovine)).